The sequence spans 204 residues: Thymidylate kinase (204 aa).

11-18 (GLDKSGKT) contributes to the ATP binding site.

Belongs to the thymidylate kinase family.

The catalysed reaction is dTMP + ATP = dTDP + ADP. Its pathway is pyrimidine metabolism; dTTP biosynthesis. The chain is Thymidylate kinase (TMK) from Rabbitpox virus (strain Utrecht) (RPV).